The chain runs to 51 residues: Ovomucoid (51 aa).

The 49-residue stretch at 3 to 51 folds into the Kazal-like domain; that stretch reads VDCSGYPKPDCTLESFPLCGSDNQTYSNKCAFCNAAVERNVTLRHLGEC. 3 disulfides stabilise this stretch: Cys-5–Cys-35, Cys-13–Cys-32, and Cys-21–Cys-51. N-linked (GlcNAc...) asparagine glycosylation is present at Asn-42.

Its subcellular location is the secreted. This Rhynchotus rufescens (Red-winged tinamou) protein is Ovomucoid.